An 808-amino-acid chain; its full sequence is Auxin response factor 4 (808 aa).

A compositionally biased stretch (pro residues) spans 1-13; it reads MPPAAMAPPPPPQ. The disordered stretch occupies residues 1–20; that stretch reads MPPAAMAPPPPPQGSSTGDP. Positions 129-231 form a DNA-binding region, TF-B3; the sequence is FCKTLTASDT…ELRVGVRRAM (103 aa). Residues 342–352 show a composition bias toward basic and acidic residues; the sequence is PSTIPRPDRVS. 3 disordered regions span residues 342 to 433, 661 to 691, and 778 to 808; these read PSTI…DSDV, TAGT…VAST, and QKMN…KSDN. Residues 402–432 show a composition bias toward polar residues; the sequence is AQAQRSQNSTVLQGQEQMTLRSNLTESNDSD. One can recognise a PB1 domain in the interval 692–785; it reads RSCTKVHKQG…EVQKMNSKSN (94 aa). The segment covering 787–799 has biased composition (basic and acidic residues); the sequence is PRKDDSSENEKGH.

Belongs to the ARF family. Homodimers and heterodimers. Expressed in roots, culms, leaves and young panicles.

Its subcellular location is the nucleus. Functionally, auxin response factors (ARFs) are transcriptional factors that bind specifically to the DNA sequence 5'-TGTCTC-3' found in the auxin-responsive promoter elements (AuxREs). The sequence is that of Auxin response factor 4 (ARF4) from Oryza sativa subsp. japonica (Rice).